The primary structure comprises 706 residues: MSGIAGTSQDTSVAASASSSSTRPAAASSSIAPPSPSLTTAPVKEQEQDDDDDQENDDEEEEEEGTAAITGADGLTAKQRKKKKSKAAAKLRKKLGLGGSPTDASEGKLLASGSSREGKISDEVVSQVQRAVQAEHGSVAANAVTKANLAKVMAMMNLERDAMLKSQDSKQKAQKAIADHKFWKTQPVMKPTDAPVVKSDQEGSIEASVPPEQVRQEPYPLPADFEWVMIDVDNEGELKEVYDLLSANYVEDDDATFRFDYSPEFLHWVLKHPGYQKTWHIGVRVASTKKLVAFISGIPHELRVREKSYQSTEINFLCVHKKLRSKRLAPVLIKEVTRQCHLTGVFHAIYTVGSVLPTPVSCSRYYHRTINAKKLAEIGFSAIPHNMSMEAHVKRFELPAKTNLPGLREMERRDVAQVGKLMRRYMRRFDMAPRFSDHEVEHILLSGRGEACQGGRGRKGQVTWTYVVENSEGRITDMFAFYSLPSSILDSDKHQSLNAAYLFYYATDVVFQGDCDCDSDSSGVCDAETGRASTSQPSSERAVALAAGKAAWQCNSLTNLTSCELADEARVAAWDSEPAHIKTALKTRLNLLINTLLIIARDHDFDVVNCVTVMDNALFLQQQKFGPGDGFLRFYLFNWRTKPVAGGMGARPGEAELDPVQAYARSMAKRAAHTDDDDVKRLAEQLIRNAAINPAEVGSGNGIVMV.

The tract at residues 1–119 is disordered; sequence MSGIAGTSQD…LASGSSREGK (119 aa). The span at 7–42 shows a compositional bias: low complexity; that stretch reads TSQDTSVAASASSSSTRPAAASSSIAPPSPSLTTAP. A compositionally biased stretch (acidic residues) spans 47–65; the sequence is EQDDDDDQENDDEEEEEEG. The segment covering 78–95 has biased composition (basic residues); the sequence is KQRKKKKSKAAAKLRKKL. Tetradecanoyl-CoA-binding positions include 180–183, 317–319, and 325–329; these read HKFW, LCV, and SKRLA. The active-site Proton acceptor; via carboxylate is the Val-706.

This sequence belongs to the NMT family. Monomer.

The protein localises to the cytoplasm. It catalyses the reaction N-terminal glycyl-[protein] + tetradecanoyl-CoA = N-tetradecanoylglycyl-[protein] + CoA + H(+). In terms of biological role, adds a myristoyl group to the N-terminal glycine residue of certain cellular proteins. The polypeptide is Glycylpeptide N-tetradecanoyltransferase (NMT1) (Mycosarcoma maydis (Corn smut fungus)).